Consider the following 352-residue polypeptide: Peptide chain release factor 1 (352 aa).

At Gln233 the chain carries N5-methylglutamine. Positions 288 to 309 are disordered; that stretch reads NAKDRKEQVGSGDRSERIRTYN. The span at 289–306 shows a compositional bias: basic and acidic residues; it reads AKDRKEQVGSGDRSERIR.

It belongs to the prokaryotic/mitochondrial release factor family. Methylated by PrmC. Methylation increases the termination efficiency of RF1.

The protein resides in the cytoplasm. In terms of biological role, peptide chain release factor 1 directs the termination of translation in response to the peptide chain termination codons UAG and UAA. This is Peptide chain release factor 1 from Helicobacter pylori (strain HPAG1).